The chain runs to 168 residues: Photosystem I assembly protein Ycf3 (168 aa).

TPR repeat units lie at residues 35–68 (AFTYYRDGMSAQSEGNYAEALQNYYEATRPEIDP), 72–105 (SYILYNIGLIHTSNGEHTKALEYYFRALERNPFL), and 120–153 (GEQAILQGDSEIAEAWSDQAAEYWKQAIALTPGN).

The protein belongs to the Ycf3 family.

It is found in the plastid. The protein resides in the chloroplast thylakoid membrane. Functionally, essential for the assembly of the photosystem I (PSI) complex. May act as a chaperone-like factor to guide the assembly of the PSI subunits. In Lemna minor (Common duckweed), this protein is Photosystem I assembly protein Ycf3.